The following is a 133-amino-acid chain: ATP synthase epsilon chain (133 aa).

Belongs to the ATPase epsilon chain family. In terms of assembly, F-type ATPases have 2 components, CF(1) - the catalytic core - and CF(0) - the membrane proton channel. CF(1) has five subunits: alpha(3), beta(3), gamma(1), delta(1), epsilon(1). CF(0) has three main subunits: a, b and c.

It localises to the cell inner membrane. In terms of biological role, produces ATP from ADP in the presence of a proton gradient across the membrane. The sequence is that of ATP synthase epsilon chain from Desulfosudis oleivorans (strain DSM 6200 / JCM 39069 / Hxd3) (Desulfococcus oleovorans).